The sequence spans 93 residues: Early E3A 10.5 kDa glycoprotein (93 aa).

An N-linked (GlcNAc...) asparagine; by host glycan is attached at Asn-3. Residues 34 to 55 traverse the membrane as a helical segment; sequence MWWFSIALMFVCLIIMWLICCL.

The protein belongs to the adenoviridae E3A-1 family. N-glycosylated and probably also O-glycosylated.

It is found in the host nucleus membrane. The chain is Early E3A 10.5 kDa glycoprotein from Homo sapiens (Human).